We begin with the raw amino-acid sequence, 204 residues long: Methylthioribulose-1-phosphate dehydratase (204 aa).

2 residues coordinate Zn(2+): H94 and H96.

The protein belongs to the aldolase class II family. MtnB subfamily. The cofactor is Zn(2+).

The catalysed reaction is 5-(methylsulfanyl)-D-ribulose 1-phosphate = 5-methylsulfanyl-2,3-dioxopentyl phosphate + H2O. It participates in amino-acid biosynthesis; L-methionine biosynthesis via salvage pathway; L-methionine from S-methyl-5-thio-alpha-D-ribose 1-phosphate: step 2/6. In terms of biological role, catalyzes the dehydration of methylthioribulose-1-phosphate (MTRu-1-P) into 2,3-diketo-5-methylthiopentyl-1-phosphate (DK-MTP-1-P). This is Methylthioribulose-1-phosphate dehydratase from Pseudomonas savastanoi pv. phaseolicola (strain 1448A / Race 6) (Pseudomonas syringae pv. phaseolicola (strain 1448A / Race 6)).